Consider the following 155-residue polypeptide: Ribonuclease H (155 aa).

The 142-residue stretch at 9 to 150 folds into the RNase H type-1 domain; the sequence is DGQQVEMWTD…ADALANQGME (142 aa). The Mg(2+) site is built by Asp-18, Glu-56, Asp-78, and Asp-142.

This sequence belongs to the RNase H family. In terms of assembly, monomer. Requires Mg(2+) as cofactor.

It is found in the cytoplasm. It carries out the reaction Endonucleolytic cleavage to 5'-phosphomonoester.. Endonuclease that specifically degrades the RNA of RNA-DNA hybrids. The sequence is that of Ribonuclease H from Bordetella pertussis (strain Tohama I / ATCC BAA-589 / NCTC 13251).